Here is a 406-residue protein sequence, read N- to C-terminus: Acetate kinase (406 aa).

Asn-10 contacts Mg(2+). Residue Lys-17 coordinates ATP. Arg-92 contributes to the substrate binding site. Asp-151 (proton donor/acceptor) is an active-site residue. Residues 211 to 215 (HLGSG), 286 to 288 (DFR), and 335 to 339 (GIGEN) each bind ATP. Glu-389 serves as a coordination point for Mg(2+).

Belongs to the acetokinase family. Homodimer. Requires Mg(2+) as cofactor. It depends on Mn(2+) as a cofactor.

The protein localises to the cytoplasm. It catalyses the reaction acetate + ATP = acetyl phosphate + ADP. Its pathway is metabolic intermediate biosynthesis; acetyl-CoA biosynthesis; acetyl-CoA from acetate: step 1/2. Its function is as follows. Catalyzes the formation of acetyl phosphate from acetate and ATP. Can also catalyze the reverse reaction. This chain is Acetate kinase, found in Buchnera aphidicola subsp. Cinara cedri (strain Cc).